Reading from the N-terminus, the 417-residue chain is Vacuolar cation/proton exchanger 3 (417 aa).

At 1–45 (MENPQIEMGAFKANGPQLQNGGLRSSMVQSWNLQRFVESALRSIR) the chain is on the cytoplasmic side. A helical transmembrane segment spans residues 46 to 66 (IVIFTSKLNLLLPFGPASIIL). The Extracellular portion of the chain corresponds to 67–73 (HYTTSRH). The chain crosses the membrane as a helical span at residues 74 to 94 (GLVFLFSMLGITPLAERLGYA). Residues 95–105 (TEQLAIYTGPT) lie on the Cytoplasmic side of the membrane. Residues 106 to 126 (VGGLLNATFGNATEMIIAIYA) traverse the membrane as a helical segment. The cation selection stretch occupies residues 115–150 (GNATEMIIAIYALKNGMIRVVQQSLLGSILSNMLLV). Topologically, residues 127–140 (LKNGMIRVVQQSLL) are extracellular. Residues 141-161 (GSILSNMLLVMGCAFFAGGIV) traverse the membrane as a helical segment. The Cytoplasmic segment spans residues 162 to 173 (HRNKDQVFSKAT). The helical transmembrane segment at 174 to 194 (AVVNSGLLLMAVMGLMFPAVL) threads the bilayer. The Extracellular portion of the chain corresponds to 195-207 (HFTHSEVRQGASE). A helical transmembrane segment spans residues 208–230 (VSLSRFSSCIMLVAYASYLYFQL). Over 231–258 (SGRNNAYSPIGSEEMPNEDAAEEDEESE) the chain is Cytoplasmic. The chain crosses the membrane as a helical span at residues 259 to 279 (IGMWESIAWLAMLTLWVSILS). Topologically, residues 280 to 291 (EYLVNAIEGASD) are extracellular. Residues 292 to 312 (SLNLPVAFISVILLPIVGNAA) form a helical membrane-spanning segment. The segment at 309–344 (GNAAEHASAIMFAMKDKLDITLGVAIGSSTQISMFV) is cation selection. The Cytoplasmic segment spans residues 313 to 330 (EHASAIMFAMKDKLDITL). Residues 331–351 (GVAIGSSTQISMFVIPFCVVI) traverse the membrane as a helical segment. Residues 352–360 (GWMMGQKMD) lie on the Extracellular side of the membrane. A helical transmembrane segment spans residues 361-381 (LNFQLFETATLFITVLVVAFM). Residues 382 to 389 (LQDGVANY) are Cytoplasmic-facing. Residues 390–410 (LKGLMLILCYLIVAASFFVHV) form a helical membrane-spanning segment. Residues 411–417 (DPQSSDD) lie on the Extracellular side of the membrane.

This sequence belongs to the Ca(2+):cation antiporter (CaCA) (TC 2.A.19) family. Cation/proton exchanger (CAX) subfamily. In terms of tissue distribution, ubiquitous.

The protein localises to the vacuole membrane. In terms of biological role, vacuolar cation/proton exchanger (CAX). Translocates Ca(2+) and other metal ions into vacuoles using the proton gradient formed by H(+)-ATPase and H(+)-pyrophosphatase. This chain is Vacuolar cation/proton exchanger 3 (CAX3), found in Oryza sativa subsp. japonica (Rice).